The chain runs to 143 residues: Spliceosomal protein DIB1 (143 aa).

A2 carries the post-translational modification N-acetylalanine.

The protein belongs to the DIM1 family. As to quaternary structure, component of the U4/U6-U5 tri-snRNP complex composed of the U4, U6 and U5 snRNAs and at least PRP3, PRP4, PRP6, PRP8, PRP18, PRP31, PRP38, SNU13, SNU23, SNU66, SNU114, SPP381, SMB1, SMD1, SMD2, SMD3, SMX2, SMX3, LSM2, LSM3, LSM4, LSM5, LSM6, LSM7, LSM8, BRR2 and DIB1.

Its subcellular location is the nucleus. In terms of biological role, essential role in pre-mRNA splicing. Also essential for entry into mitosis (G2/M progression) as well as for chromosome segregation during mitosis. The sequence is that of Spliceosomal protein DIB1 (DIB1) from Saccharomyces cerevisiae (strain ATCC 204508 / S288c) (Baker's yeast).